Reading from the N-terminus, the 485-residue chain is Glutamyl-tRNA(Gln) amidotransferase subunit A (485 aa).

Residues lysine 79 and serine 154 each act as charge relay system in the active site. The Acyl-ester intermediate role is filled by serine 178.

It belongs to the amidase family. GatA subfamily. In terms of assembly, heterotrimer of A, B and C subunits.

It carries out the reaction L-glutamyl-tRNA(Gln) + L-glutamine + ATP + H2O = L-glutaminyl-tRNA(Gln) + L-glutamate + ADP + phosphate + H(+). Allows the formation of correctly charged Gln-tRNA(Gln) through the transamidation of misacylated Glu-tRNA(Gln) in organisms which lack glutaminyl-tRNA synthetase. The reaction takes place in the presence of glutamine and ATP through an activated gamma-phospho-Glu-tRNA(Gln). This chain is Glutamyl-tRNA(Gln) amidotransferase subunit A, found in Staphylococcus aureus.